The primary structure comprises 203 residues: MSPKRRTQAERAMETQGKLIAAALGVLREKGYAGFRIADVPGAAGVSRGAQSHHFPTKLELLLATFEWLYEQITERSRARLAKLKPEDDVIQQMLDDAAEFFLDDDFSISLDLIVAADRDPALREGIQRTVERNRFVVEDMWLGVLVSRGLSRDDAEDILWLIFNSVRGLAVRSLWQKDKERFERVRNSTLEIARERYAKFKR.

The HTH tetR-type domain occupies 13–73 (METQGKLIAA…ATFEWLYEQI (61 aa)). The segment at residues 36-55 (RIADVPGAAGVSRGAQSHHF) is a DNA-binding region (H-T-H motif).

Its function is as follows. Involved in the repression of the cym and cmt operons which are responsible of the p-cymene degradation. The sequence is that of HTH-type transcriptional regulator CymR from Pseudomonas putida (Arthrobacter siderocapsulatus).